The sequence spans 523 residues: Leghemoglobin reductase (523 aa).

A mitochondrion-targeting transit peptide spans 1–30 (MAMASLARRKAYAVVSSSRSSVFLTSLRGF). FAD is bound by residues 66-75 (EKRGTLGGTC), K84, G148, and 177-179 (TGS). Residues C75 and C80 are joined by a disulfide bond. NAD(+) contacts are provided by residues 214–221 (GAGYIGLE), E237, V271, and G306. Residues D347 and 353–356 (MLAH) contribute to the FAD site. The Proton acceptor role is filled by H479.

It belongs to the class-I pyridine nucleotide-disulfide oxidoreductase family. In terms of assembly, homodimer. FAD serves as cofactor.

It localises to the mitochondrion. It catalyses the reaction 2 Fe(III)-[leghemoglobin] + NADH = 2 Fe(II)-[leghemoglobin] + NAD(+) + H(+). It carries out the reaction 2 Fe(III)-[leghemoglobin] + NADPH = 2 Fe(II)-[leghemoglobin] + NADP(+) + H(+). Reduces ferric leghemoglobin (Lb) to ferrous Lb. The chain is Leghemoglobin reductase (FLBR) from Vigna unguiculata (Cowpea).